Consider the following 403-residue polypeptide: Coenzyme A biosynthesis bifunctional protein CoaBC (403 aa).

The tract at residues 1–197 is phosphopantothenoylcysteine decarboxylase; the sequence is MLHHVKLIYA…LHPKSLEGKR (197 aa). The interval 198 to 403 is phosphopantothenate--cysteine ligase; that stretch reads VLVTAGATRE…RLWDEIEKML (206 aa). CTP-binding residues include Asp-287, Lys-297, and Phe-330.

It in the N-terminal section; belongs to the HFCD (homo-oligomeric flavin containing Cys decarboxylase) superfamily. The protein in the C-terminal section; belongs to the PPC synthetase family. It depends on Mg(2+) as a cofactor. Requires FMN as cofactor.

It catalyses the reaction N-[(R)-4-phosphopantothenoyl]-L-cysteine + H(+) = (R)-4'-phosphopantetheine + CO2. It carries out the reaction (R)-4'-phosphopantothenate + L-cysteine + CTP = N-[(R)-4-phosphopantothenoyl]-L-cysteine + CMP + diphosphate + H(+). The protein operates within cofactor biosynthesis; coenzyme A biosynthesis. In terms of biological role, catalyzes two sequential steps in the biosynthesis of coenzyme A. In the first step cysteine is conjugated to 4'-phosphopantothenate to form 4-phosphopantothenoylcysteine. In the second step the latter compound is decarboxylated to form 4'-phosphopantotheine. This is Coenzyme A biosynthesis bifunctional protein CoaBC from Thermococcus kodakarensis (strain ATCC BAA-918 / JCM 12380 / KOD1) (Pyrococcus kodakaraensis (strain KOD1)).